Consider the following 67-residue polypeptide: Probable Sec-independent protein translocase protein TatE (67 aa).

The helical transmembrane segment at 4–21 threads the bilayer; that stretch reads ISITKLLVVAALVVLLFG. The disordered stretch occupies residues 46-67; it reads EDAGAKKEAGGDIQAEKLSHKE.

This sequence belongs to the TatA/E family. TatE subfamily.

It is found in the cell inner membrane. Part of the twin-arginine translocation (Tat) system that transports large folded proteins containing a characteristic twin-arginine motif in their signal peptide across membranes. TatE shares overlapping functions with TatA. The sequence is that of Probable Sec-independent protein translocase protein TatE from Citrobacter koseri (strain ATCC BAA-895 / CDC 4225-83 / SGSC4696).